The following is a 948-amino-acid chain: 3-hydroxy-3-methylglutaryl-coenzyme A reductase (948 aa).

The next 6 helical transmembrane spans lie at 9–25, 55–71, 96–112, 124–140, 207–223, and 286–302; these read LLFFDCFSTGTFFVLLI, VIIFLVVFVYFIGVLTC, LILFTFALCSLSSVLFV, TSVFLLFSDLSVFFIVL, IIYIMIVFVFLPSFMRI, and CWSTTFVIFVSLIILHL. N316 is a glycosylation site (N-linked (GlcNAc...) asparagine). A helical transmembrane segment spans residues 347–363; the sequence is VINANLVVYLFLGLFLF. Residues 364–466 form a linker region; the sequence is KRIRLNKPIN…MLTEKIKQGL (103 aa). N-linked (GlcNAc...) asparagine glycosylation occurs at N430. A catalytic region spans residues 467-948; it reads GHELSDTEIL…VNPEISHYTM (482 aa). Active-site charge relay system residues include E567, K699, and D777. The Proton donor role is filled by H869. N-linked (GlcNAc...) asparagine glycosylation occurs at N895.

It belongs to the HMG-CoA reductase family.

It localises to the endoplasmic reticulum membrane. The protein localises to the peroxisome membrane. It carries out the reaction (R)-mevalonate + 2 NADP(+) + CoA = (3S)-3-hydroxy-3-methylglutaryl-CoA + 2 NADPH + 2 H(+). It functions in the pathway metabolic intermediate biosynthesis; (R)-mevalonate biosynthesis; (R)-mevalonate from acetyl-CoA: step 3/3. Its function is as follows. This transmembrane glycoprotein is involved in the control of cholesterol and nonsterol isoprenoid compounds biosynthesis. It is the rate-limiting enzyme of sterol biosynthesis. The chain is 3-hydroxy-3-methylglutaryl-coenzyme A reductase from Schistosoma mansoni (Blood fluke).